Reading from the N-terminus, the 197-residue chain is Dephospho-CoA kinase (197 aa).

The DPCK domain maps to 3 to 197 (ILGLTGSIAM…TGCLVGQGSR (195 aa)). 11 to 16 (AMGKST) provides a ligand contact to ATP.

The protein belongs to the CoaE family.

It is found in the cytoplasm. It catalyses the reaction 3'-dephospho-CoA + ATP = ADP + CoA + H(+). It participates in cofactor biosynthesis; coenzyme A biosynthesis; CoA from (R)-pantothenate: step 5/5. In terms of biological role, catalyzes the phosphorylation of the 3'-hydroxyl group of dephosphocoenzyme A to form coenzyme A. The polypeptide is Dephospho-CoA kinase (Zymomonas mobilis subsp. mobilis (strain ATCC 31821 / ZM4 / CP4)).